Reading from the N-terminus, the 1116-residue chain is Pleckstrin homology domain-containing family A member 5 (1116 aa).

Ala2 bears the N-acetylalanine mark. The region spanning 10–43 (ISLPRSWTYGITRGGRVFFINEEAKSTTWLHPVT) is the WW 1 domain. Ser55 is subject to Phosphoserine. Residues 56 to 89 (TDLPTGWEEAYTFEGARYYINHNERKVTCKHPVT) enclose the WW 2 domain. The tract at residues 140 to 163 (SPVGRTSRASKKVHNFGKRSNSIK) is disordered. The segment covering 147–156 (RASKKVHNFG) has biased composition (basic residues). One can recognise a PH domain in the interval 169–268 (PVVRRGWLYK…WMKAMLDAAL (100 aa)). A Glycyl lysine isopeptide (Lys-Gly) (interchain with G-Cter in SUMO2) cross-link involves residue Lys301. Ser382 and Ser410 each carry phosphoserine. 2 positions are modified to phosphothreonine: Thr438 and Thr460. The segment at 459–495 (RTLPRNSKTRPESICSVTPSTHDKTLGPGAEEKRRSM) is disordered. Residues 479 to 495 (THDKTLGPGAEEKRRSM) show a composition bias toward basic and acidic residues. Residues Ser568, Ser607, Ser809, Ser855, Ser933, and Ser937 each carry the phosphoserine modification. Disordered regions lie at residues 928-978 (GASD…PATE) and 1025-1116 (RNKD…FMCV). Residues 930–949 (SDQSPLQSPSNLRDNPFRTT) are compositionally biased toward polar residues. Residues 952–978 (RRRDDKELDTAIRENDVKPDHETPATE) are compositionally biased toward basic and acidic residues. The span at 1036 to 1046 (FSPQDETQTAN) shows a compositional bias: polar residues. Residues 1047-1061 (HKPEEHPEENTKNSV) are compositionally biased toward basic and acidic residues. Positions 1070-1085 (SYESTPEVSRGNQTMA) are enriched in polar residues. Low complexity predominate over residues 1088–1101 (SLSPSPESSASPVP).

As to expression, highly expressed in heart and kidney.

It is found in the cytoplasm. The sequence is that of Pleckstrin homology domain-containing family A member 5 (PLEKHA5) from Homo sapiens (Human).